A 92-amino-acid polypeptide reads, in one-letter code: Bombyxin A-6 (92 aa).

Positions 1–19 (MKILLAIALMLSTVMWVST) are cleaved as a signal peptide. Q20 carries the post-translational modification Pyrrolidone carboxylic acid. 3 cysteine pairs are disulfide-bonded: C29/C79, C41/C92, and C78/C83. Positions 50–70 (SGAQFASYGSAWLMPYSEGRG) are cleaved as a propeptide — c peptide like.

The protein belongs to the insulin family. In terms of assembly, heterodimer of a B chain and an A chain linked by two disulfide bonds.

Its subcellular location is the secreted. Its function is as follows. Brain peptide responsible for activation of prothoracic glands to produce ecdysone in insects. This Bombyx mori (Silk moth) protein is Bombyxin A-6 (BBXA6).